The primary structure comprises 552 residues: Histone deacetylase 15 (552 aa).

Residues E86–S115 form a RanBP2-type zinc finger. Residues S149–G462 form a histone deacetylase region. The active-site Proton donor/acceptor is H277. Zn(2+) contacts are provided by D313, H315, and D404.

This sequence belongs to the histone deacetylase family. HD type 2 subfamily. As to quaternary structure, interacts with PIF3 in the dark. Interacts with HY5. Interacts with MYB96. Forms homotetramers. Zn(2+) serves as cofactor. Expressed in stems, leaves, flowers, siliques and mature seeds.

It localises to the nucleus. The protein resides in the cytoplasm. The enzyme catalyses N(6)-acetyl-L-lysyl-[histone] + H2O = L-lysyl-[histone] + acetate. With respect to regulation, inhibited by trichostatin A (TSA), a well-known histone deacetylase inhibitor. Responsible for the deacetylation of lysine residues on the N-terminal part of the core histones (H2A, H2B, H3 and H4). Histone deacetylation gives a tag for epigenetic repression and plays an important role in transcriptional regulation, cell cycle progression and developmental events. Histone deacetylases act via the formation of large multiprotein complexes. Represses chlorophyll biosynthesis and photosynthesis in the dark. Is recruited by PIF3 to the promoters of chlorophyll biosynthetic and photosynthetic genes, and represses their transcription by histone deacetylation. Involved in the repression of hypocotyl cell elongation to promote photomorphogenesis. Is recruited by HY5 to the promoters of a subset of cell wall organization and auxin signaling-related genes, and represses gene expression by decreasing the levels of histone H4 acetylation in a light-dependent manner. Promotes abscisic acid (ABA) signaling. Is recruited by MYB96 to the promoters of a subset of Rho GTPase (ROP) genes, which repress ABA signaling at the early stages of signal transduction. Represses ROP expression by removing acetyl groups of histone H3 and H4 from the cognate regions, particularly in the presence of ABA. Represses the plant response to elevated ambient temperature by directly repressing warm temperature-responsive genes. The sequence is that of Histone deacetylase 15 from Arabidopsis thaliana (Mouse-ear cress).